The primary structure comprises 444 residues: CCA-adding enzyme (444 aa).

2 residues coordinate ATP: Ser57 and Arg60. CTP contacts are provided by Ser57 and Arg60. The Mg(2+) site is built by Asp69, Asp71, and Asp124. ATP is bound by residues His147, Lys168, and Tyr177. CTP-binding residues include His147, Lys168, and Tyr177.

The protein belongs to the tRNA nucleotidyltransferase/poly(A) polymerase family. Archaeal CCA-adding enzyme subfamily. As to quaternary structure, homodimer. Mg(2+) is required as a cofactor.

It catalyses the reaction a tRNA precursor + 2 CTP + ATP = a tRNA with a 3' CCA end + 3 diphosphate. It carries out the reaction a tRNA with a 3' CCA end + 2 CTP + ATP = a tRNA with a 3' CCACCA end + 3 diphosphate. In terms of biological role, catalyzes the addition and repair of the essential 3'-terminal CCA sequence in tRNAs without using a nucleic acid template. Adds these three nucleotides in the order of C, C, and A to the tRNA nucleotide-73, using CTP and ATP as substrates and producing inorganic pyrophosphate. tRNA 3'-terminal CCA addition is required both for tRNA processing and repair. Also involved in tRNA surveillance by mediating tandem CCA addition to generate a CCACCA at the 3' terminus of unstable tRNAs. While stable tRNAs receive only 3'-terminal CCA, unstable tRNAs are marked with CCACCA and rapidly degraded. The polypeptide is CCA-adding enzyme (Methanococcus maripaludis (strain C5 / ATCC BAA-1333)).